Consider the following 65-residue polypeptide: Large ribosomal subunit protein bL35 (65 aa).

A disordered region spans residues 1 to 22; that stretch reads MPKMKTKSSAKKRFKVTGSGKI.

This sequence belongs to the bacterial ribosomal protein bL35 family.

This chain is Large ribosomal subunit protein bL35, found in Flavobacterium johnsoniae (strain ATCC 17061 / DSM 2064 / JCM 8514 / BCRC 14874 / CCUG 350202 / NBRC 14942 / NCIMB 11054 / UW101) (Cytophaga johnsonae).